The following is a 1415-amino-acid chain: DNA-directed RNA polymerase subunit beta' (1415 aa).

Cysteine 69, cysteine 71, cysteine 84, and cysteine 87 together coordinate Zn(2+). The Mg(2+) site is built by aspartate 461, aspartate 463, and aspartate 465. Cysteine 805, cysteine 879, cysteine 886, and cysteine 889 together coordinate Zn(2+).

It belongs to the RNA polymerase beta' chain family. As to quaternary structure, the RNAP catalytic core consists of 2 alpha, 1 beta, 1 beta' and 1 omega subunit. When a sigma factor is associated with the core the holoenzyme is formed, which can initiate transcription. Mg(2+) serves as cofactor. Zn(2+) is required as a cofactor.

It carries out the reaction RNA(n) + a ribonucleoside 5'-triphosphate = RNA(n+1) + diphosphate. DNA-dependent RNA polymerase catalyzes the transcription of DNA into RNA using the four ribonucleoside triphosphates as substrates. This chain is DNA-directed RNA polymerase subunit beta', found in Anaplasma marginale (strain Florida).